The primary structure comprises 324 residues: Glyoxylate/hydroxypyruvate reductase B (324 aa).

Catalysis depends on residues Arg237 and Glu266. His285 acts as the Proton donor in catalysis.

The protein belongs to the D-isomer specific 2-hydroxyacid dehydrogenase family. GhrB subfamily. In terms of assembly, homodimer.

It localises to the cytoplasm. The catalysed reaction is glycolate + NADP(+) = glyoxylate + NADPH + H(+). It carries out the reaction (R)-glycerate + NAD(+) = 3-hydroxypyruvate + NADH + H(+). The enzyme catalyses (R)-glycerate + NADP(+) = 3-hydroxypyruvate + NADPH + H(+). Catalyzes the NADPH-dependent reduction of glyoxylate and hydroxypyruvate into glycolate and glycerate, respectively. The chain is Glyoxylate/hydroxypyruvate reductase B from Escherichia coli (strain K12 / MC4100 / BW2952).